Consider the following 171-residue polypeptide: Lipoprotein signal peptidase (171 aa).

4 consecutive transmembrane segments (helical) span residues 15–35 (WLWL…IVMD), 47–67 (VLPF…SFLS), 72–92 (WQRW…AYWM), and 107–127 (ALII…GFVV). Active-site residues include Asp128 and Asp146. A helical membrane pass occupies residues 141 to 161 (AFNLADSTICIGAAMIILDGF).

Belongs to the peptidase A8 family.

It localises to the cell inner membrane. It carries out the reaction Release of signal peptides from bacterial membrane prolipoproteins. Hydrolyzes -Xaa-Yaa-Zaa-|-(S,diacylglyceryl)Cys-, in which Xaa is hydrophobic (preferably Leu), and Yaa (Ala or Ser) and Zaa (Gly or Ala) have small, neutral side chains.. The protein operates within protein modification; lipoprotein biosynthesis (signal peptide cleavage). This protein specifically catalyzes the removal of signal peptides from prolipoproteins. This chain is Lipoprotein signal peptidase, found in Vibrio cholerae serotype O1 (strain ATCC 39541 / Classical Ogawa 395 / O395).